Consider the following 157-residue polypeptide: Probable Brix domain-containing ribosomal biogenesis protein (157 aa).

Residues 1–157 (MLVTTSRKPS…KFNIKGFKKY (157 aa)) form the Brix domain.

Functionally, probably involved in the biogenesis of the ribosome. In Methanosarcina mazei (strain ATCC BAA-159 / DSM 3647 / Goe1 / Go1 / JCM 11833 / OCM 88) (Methanosarcina frisia), this protein is Probable Brix domain-containing ribosomal biogenesis protein.